The sequence spans 239 residues: Ribonuclease 3 (239 aa).

The region spanning 12–137 (RAKLEGLIGH…LIAAIYLDGG (126 aa)) is the RNase III domain. Glu-50 is a Mg(2+) binding site. The active site involves Asp-54. Positions 123 and 126 each coordinate Mg(2+). Residue Glu-126 is part of the active site. One can recognise a DRBM domain in the interval 162–231 (DAKTELQEWS…ATKMLEREGI (70 aa)).

It belongs to the ribonuclease III family. Homodimer. It depends on Mg(2+) as a cofactor.

It localises to the cytoplasm. The catalysed reaction is Endonucleolytic cleavage to 5'-phosphomonoester.. Functionally, digests double-stranded RNA. Involved in the processing of primary rRNA transcript to yield the immediate precursors to the large and small rRNAs (23S and 16S). Processes some mRNAs, and tRNAs when they are encoded in the rRNA operon. Processes pre-crRNA and tracrRNA of type II CRISPR loci if present in the organism. This Rhizobium johnstonii (strain DSM 114642 / LMG 32736 / 3841) (Rhizobium leguminosarum bv. viciae) protein is Ribonuclease 3.